A 269-amino-acid chain; its full sequence is Iron(3+)-hydroxamate import ATP-binding protein FhuC (269 aa).

The ABC transporter domain occupies 4–240; sequence LSTEQLGIGY…DILKQVFQID (237 aa). ATP-binding positions include 36 to 43 and 160 to 171; these read GPNGCGKS and LLLLDEPTTYLD.

This sequence belongs to the ABC transporter superfamily. Iron (Fe3+)-hydroxamate importer (TC 3.A.1.14.7) family. The complex is composed of an ATP-binding protein (FhuC), two transmembrane proteins (FhuB and FhuG) and a solute-binding protein (FhuD or YxeB).

It localises to the cell membrane. It catalyses the reaction ATP + H2O + Fe(3+)-hydroxamate complex-[hydroxamate-binding protein]Side 1 = ADP + phosphate + Fe(3+)-hydroxamate complexSide 2 + [hydroxamate-binding protein]Side 1.. Its function is as follows. Part of the ABC transporter complex FhuBGCD involved in iron(3+)-hydroxamate import. Responsible for energy coupling to the transport system. The protein is Iron(3+)-hydroxamate import ATP-binding protein FhuC (fhuC) of Bacillus subtilis (strain 168).